The following is a 356-amino-acid chain: Chaperone protein DnaJ (356 aa).

The 65-residue stretch at 5 to 69 (DYYQILGVSK…ERRKEYDRIL (65 aa)) folds into the J domain. The CR-type zinc-finger motif lies at 121–197 (GCEKDIEYER…CSGRGRVAMH (77 aa)). Cysteine 134, cysteine 137, cysteine 151, cysteine 154, cysteine 171, cysteine 174, cysteine 185, and cysteine 188 together coordinate Zn(2+). 4 CXXCXGXG motif repeats span residues 134–141 (CPTCEGKG), 151–158 (CHACEGTG), 171–178 (CSVCKGRG), and 185–192 (CPACSGRG).

The protein belongs to the DnaJ family. As to quaternary structure, homodimer. Zn(2+) serves as cofactor.

The protein localises to the cytoplasm. Functionally, participates actively in the response to hyperosmotic and heat shock by preventing the aggregation of stress-denatured proteins and by disaggregating proteins, also in an autonomous, DnaK-independent fashion. Unfolded proteins bind initially to DnaJ; upon interaction with the DnaJ-bound protein, DnaK hydrolyzes its bound ATP, resulting in the formation of a stable complex. GrpE releases ADP from DnaK; ATP binding to DnaK triggers the release of the substrate protein, thus completing the reaction cycle. Several rounds of ATP-dependent interactions between DnaJ, DnaK and GrpE are required for fully efficient folding. Also involved, together with DnaK and GrpE, in the DNA replication of plasmids through activation of initiation proteins. The polypeptide is Chaperone protein DnaJ (Hydrogenobacter thermophilus (strain DSM 6534 / IAM 12695 / TK-6)).